Reading from the N-terminus, the 215-residue chain is UPF0323 lipoprotein jhp_0217 (215 aa).

Positions 1–27 are cleaved as a signal peptide; that stretch reads MKKPYRKISDYAIVGGLSALVMVSIVG. The N-palmitoyl cysteine moiety is linked to residue cysteine 28. Cysteine 28 is lipidated: S-diacylglycerol cysteine. A compositionally biased stretch (polar residues) spans 158 to 169; sequence QRTYKSPQAYQR. The disordered stretch occupies residues 158 to 215; it reads QRTYKSPQAYQRSQNSFSKSAPSASSMGTASKGQSGFFGSSRPTSSPAISSGTRGFNA. A compositionally biased stretch (low complexity) spans 170–183; the sequence is SQNSFSKSAPSASS. Polar residues predominate over residues 184 to 195; the sequence is MGTASKGQSGFF. Over residues 197 to 208 the composition is skewed to low complexity; the sequence is SSRPTSSPAISS.

This sequence belongs to the UPF0323 family.

Its subcellular location is the cell membrane. The polypeptide is UPF0323 lipoprotein jhp_0217 (Helicobacter pylori (strain J99 / ATCC 700824) (Campylobacter pylori J99)).